The following is a 203-amino-acid chain: Glycerol-3-phosphate acyltransferase (203 aa).

The next 4 membrane-spanning stretches (helical) occupy residues 4-24 (LALI…AVLI), 68-88 (IPVW…VIAI), 117-137 (PIGL…AVLF), and 155-175 (TWMF…LIVF).

The protein belongs to the PlsY family. As to quaternary structure, probably interacts with PlsX.

It is found in the cell inner membrane. The catalysed reaction is an acyl phosphate + sn-glycerol 3-phosphate = a 1-acyl-sn-glycero-3-phosphate + phosphate. Its pathway is lipid metabolism; phospholipid metabolism. In terms of biological role, catalyzes the transfer of an acyl group from acyl-phosphate (acyl-PO(4)) to glycerol-3-phosphate (G3P) to form lysophosphatidic acid (LPA). This enzyme utilizes acyl-phosphate as fatty acyl donor, but not acyl-CoA or acyl-ACP. The polypeptide is Glycerol-3-phosphate acyltransferase (Vibrio campbellii (strain ATCC BAA-1116)).